We begin with the raw amino-acid sequence, 156 residues long: Small ribosomal subunit protein uS7 (156 aa).

The protein belongs to the universal ribosomal protein uS7 family. As to quaternary structure, part of the 30S ribosomal subunit. Contacts proteins S9 and S11.

One of the primary rRNA binding proteins, it binds directly to 16S rRNA where it nucleates assembly of the head domain of the 30S subunit. Is located at the subunit interface close to the decoding center, probably blocks exit of the E-site tRNA. In Sorangium cellulosum (strain So ce56) (Polyangium cellulosum (strain So ce56)), this protein is Small ribosomal subunit protein uS7.